The sequence spans 66 residues: Early E3 7.7 kDa protein (66 aa).

2 N-linked (GlcNAc...) asparagine; by host glycosylation sites follow: Asn7 and Asn24. The helical transmembrane segment at 44–64 (ITILIVIGILILSVILYFLFS) threads the bilayer.

It is found in the host nucleus membrane. The polypeptide is Early E3 7.7 kDa protein (Human adenovirus B serotype 7 (HAdV-7)).